An 81-amino-acid polypeptide reads, in one-letter code: Photosystem I iron-sulfur center (81 aa).

4Fe-4S ferredoxin-type domains are found at residues 2–31 (SHSV…MVPW) and 39–68 (IASS…IRVY). Residues cysteine 11, cysteine 14, cysteine 17, cysteine 21, cysteine 48, cysteine 51, cysteine 54, and cysteine 58 each coordinate [4Fe-4S] cluster.

The G.violaceus PSI reaction center is composed of one copy each of PsaA,B,C,D,E,F,L,M and Z, and forms trimeric complexes. It depends on [4Fe-4S] cluster as a cofactor.

The protein localises to the cell inner membrane. The catalysed reaction is reduced [plastocyanin] + hnu + oxidized [2Fe-2S]-[ferredoxin] = oxidized [plastocyanin] + reduced [2Fe-2S]-[ferredoxin]. Apoprotein for the two 4Fe-4S centers FA and FB of photosystem I (PSI); essential for photochemical activity. FB is the terminal electron acceptor of PSI, donating electrons to ferredoxin. The C-terminus interacts with PsaA/B/D and helps assemble the protein into the PSI complex. Required for binding of PsaD and PsaE to PSI. PSI is a plastocyanin/cytochrome c6-ferredoxin oxidoreductase, converting photonic excitation into a charge separation, which transfers an electron from the donor P700 chlorophyll pair to the spectroscopically characterized acceptors A0, A1, FX, FA and FB in turn. This chain is Photosystem I iron-sulfur center, found in Gloeobacter violaceus (strain ATCC 29082 / PCC 7421).